A 160-amino-acid chain; its full sequence is MKKIILTLSLGLLTACSAQIQKAEQNDVKLAPPTDVRSGYIRLVKNVNYYIDSESIWVDNQEPQIVHFDAVVNLDRGLYVYPEPKRYARSVRQYKILNCANYHLTQIRTDFYDEFWGQGLRAAPKKQKKHTLSLTPDTTLYNAAQIICANYGKAFSVDKK.

The N-terminal stretch at 1–15 (MKKIILTLSLGLLTA) is a signal peptide. Cysteine 16 carries the N-palmitoyl cysteine lipid modification. The S-diacylglycerol cysteine moiety is linked to residue cysteine 16.

It is found in the cell outer membrane. The protein localises to the cell surface. Its function is as follows. Acts as a multifunctional adhesin involved in direct interactions with host epithelial cells and host proteins. The sequence is that of Surface-adhesin protein E (pe) from Haemophilus influenzae (strain ATCC 51907 / DSM 11121 / KW20 / Rd).